The chain runs to 293 residues: Heterogeneous nuclear ribonucleoprotein C-like 4 (293 aa).

The 72-residue stretch at 16-87 (SRVFIGNLNT…QVVDINLAAE (72 aa)) folds into the RRM domain. Disordered regions lie at residues 140 to 177 (VVPS…KLKG) and 208 to 293 (HCKQ…QDDS). Residues 177–208 (GDDLQAIKQELTQIKQKVDSLLENLEKIEKEH) adopt a coiled-coil conformation. Basic and acidic residues-rich tracts occupy residues 208 to 222 (HCKQ…KSEE) and 229 to 240 (SKKDKTHVKMES). A compositionally biased stretch (acidic residues) spans 242–263 (GGADDSVEEGDLLCDDDNEDQG). The span at 269 to 293 (LIKDDEKGAEEGEDDRDRANGQDDS) shows a compositional bias: basic and acidic residues.

Belongs to the RRM HNRPC family. RALY subfamily.

Its subcellular location is the nucleus. The chain is Heterogeneous nuclear ribonucleoprotein C-like 4 from Homo sapiens (Human).